A 678-amino-acid chain; its full sequence is Methionine--tRNA ligase (678 aa).

The 'HIGH' region motif lies at Pro-18–His-28. Zn(2+) is bound by residues Cys-149, Cys-152, Cys-162, and Cys-165. Residues Lys-334–Ser-338 carry the 'KMSKS' region motif. Position 337 (Lys-337) interacts with ATP. Residues Asp-577–Met-678 form the tRNA-binding domain.

The protein belongs to the class-I aminoacyl-tRNA synthetase family. MetG type 1 subfamily. Homodimer. It depends on Zn(2+) as a cofactor.

It is found in the cytoplasm. The enzyme catalyses tRNA(Met) + L-methionine + ATP = L-methionyl-tRNA(Met) + AMP + diphosphate. Is required not only for elongation of protein synthesis but also for the initiation of all mRNA translation through initiator tRNA(fMet) aminoacylation. In Marinobacter nauticus (strain ATCC 700491 / DSM 11845 / VT8) (Marinobacter aquaeolei), this protein is Methionine--tRNA ligase.